The following is a 478-amino-acid chain: MHTMNKTAESVWDNCLSFIKDNIQEQAYKTWFEPIKSVELTDNALYIQVPSKFFYEWLEEHYVKLLKVALTKELGKNAKLLYKIKMENTYGNKLPFTEQLPSAHRSPVRTQEIDVPVQQKNPELRNPFIIPGIRNLKIESQLNANYSFDNFLEGDSNRLARSAGMAVANKPGGTSFNPLLIFGGVGLGKTHLAHAIGVEVKEKYPEKTVLYISAEIFTQQYIESVKKNNRNDFIHFYQLIDVLIIDDVQFLSGKTGTQDVFFHIFNYLHQNGKQVILTSDKAPVDMQDIEQRLLSRFKWGLSAEIHQPDYETRISILKNILYRDGVEMPEEIIEYVARNIKSNVRELEGAIISLIAQSSFNKKEVTLELAKQVVEKFVKNVKREVSIDYIQKVVSDYFQLDLEVLQSKTRKRHVVQARQLAMFFAKRYTKASLANIGSQIGDRDHATVLHACKTVDNLVTTDKQFKKFVDDINKKLSL.

Positions 1–82 (MHTMNKTAES…ELGKNAKLLY (82 aa)) are domain I, interacts with DnaA modulators. The domain II stretch occupies residues 82–140 (YKIKMENTYGNKLPFTEQLPSAHRSPVRTQEIDVPVQQKNPELRNPFIIPGIRNLKIES). The tract at residues 141–358 (QLNANYSFDN…GAIISLIAQS (218 aa)) is domain III, AAA+ region. ATP-binding residues include Gly186, Gly188, Lys189, and Thr190. Residues 359-478 (SFNKKEVTLE…VDDINKKLSL (120 aa)) are domain IV, binds dsDNA.

The protein belongs to the DnaA family. As to quaternary structure, oligomerizes as a right-handed, spiral filament on DNA at oriC.

It is found in the cytoplasm. Its function is as follows. Plays an essential role in the initiation and regulation of chromosomal replication. ATP-DnaA binds to the origin of replication (oriC) to initiate formation of the DNA replication initiation complex once per cell cycle. Binds the DnaA box (a 9 base pair repeat at the origin) and separates the double-stranded (ds)DNA. Forms a right-handed helical filament on oriC DNA; dsDNA binds to the exterior of the filament while single-stranded (ss)DNA is stabiized in the filament's interior. The ATP-DnaA-oriC complex binds and stabilizes one strand of the AT-rich DNA unwinding element (DUE), permitting loading of DNA polymerase. After initiation quickly degrades to an ADP-DnaA complex that is not apt for DNA replication. Binds acidic phospholipids. This Flavobacterium psychrophilum (strain ATCC 49511 / DSM 21280 / CIP 103535 / JIP02/86) protein is Chromosomal replication initiator protein DnaA.